The following is a 337-amino-acid chain: tRNA N6-adenosine threonylcarbamoyltransferase (337 aa).

Fe cation contacts are provided by H111 and H115. Residues 134–138 (LVSGG), D167, G180, and N272 contribute to the substrate site. D300 lines the Fe cation pocket.

Belongs to the KAE1 / TsaD family. Fe(2+) is required as a cofactor.

It localises to the cytoplasm. It catalyses the reaction L-threonylcarbamoyladenylate + adenosine(37) in tRNA = N(6)-L-threonylcarbamoyladenosine(37) in tRNA + AMP + H(+). In terms of biological role, required for the formation of a threonylcarbamoyl group on adenosine at position 37 (t(6)A37) in tRNAs that read codons beginning with adenine. Is involved in the transfer of the threonylcarbamoyl moiety of threonylcarbamoyl-AMP (TC-AMP) to the N6 group of A37, together with TsaE and TsaB. TsaD likely plays a direct catalytic role in this reaction. This Shewanella sediminis (strain HAW-EB3) protein is tRNA N6-adenosine threonylcarbamoyltransferase.